A 140-amino-acid polypeptide reads, in one-letter code: Mitochondrial import receptor subunit TOM22 homolog (140 aa).

Residues 1-11 (MAAAAAGPGAP) show a composition bias toward low complexity. Positions 1-40 (MAAAAAGPGAPLSADELLPKGDAEKPEEELEEEDDEELDE) are disordered. Residues 1–81 (MAAAAAGPGA…AQKMYRFSRA (81 aa)) lie on the Cytoplasmic side of the membrane. At Ser-13 the chain carries Phosphoserine. Over residues 25–40 (KPEEELEEEDDEELDE) the composition is skewed to acidic residues. Residues 39–48 (DETLSERLWG) form an import sequence; necessary for mitochondrion outer membrane localization and integration in the TOM complex region. A Phosphothreonine modification is found at Thr-41. Phosphoserine is present on Ser-43. The interval 81–101 (AALWIGTTSFMILVLPVVFET) is TMD; necessary for mitochondrion outer membrane localization and integration in the TOM complex. The chain crosses the membrane as a helical span at residues 82–101 (ALWIGTTSFMILVLPVVFET). The Mitochondrial intermembrane segment spans residues 102-140 (EKLQMEQQQQLQQRQILLGPNTGLSGGMPGALPSLPGKI). Positions 121-140 (PNTGLSGGMPGALPSLPGKI) are C-tail signal; necessary for mitochondrion outer membrane localization and integration in the TOM complex.

Belongs to the Tom22 family. As to quaternary structure, forms part of the preprotein translocase complex of the outer mitochondrial membrane (TOM complex) which consists of at least 7 different proteins (TOMM5, TOMM6, TOMM7, TOMM20, TOMM22, TOMM40 and TOMM70). Interacts with PPP2R2B and TOMM40.

It is found in the mitochondrion outer membrane. Functionally, central receptor component of the translocase of the outer membrane of mitochondria (TOM complex) responsible for the recognition and translocation of cytosolically synthesized mitochondrial preproteins. Together with the peripheral receptor TOM20 functions as the transit peptide receptor and facilitates the movement of preproteins into the translocation pore. Required for the translocation across the mitochondrial outer membrane of cytochrome P450 monooxygenases. The protein is Mitochondrial import receptor subunit TOM22 homolog (TOMM22) of Bos taurus (Bovine).